Here is a 159-residue protein sequence, read N- to C-terminus: Ribosomal RNA large subunit methyltransferase H (159 aa).

S-adenosyl-L-methionine-binding positions include Leu76, Gly108, and Phe127 to Phe132.

The protein belongs to the RNA methyltransferase RlmH family. Homodimer.

It is found in the cytoplasm. The enzyme catalyses pseudouridine(1915) in 23S rRNA + S-adenosyl-L-methionine = N(3)-methylpseudouridine(1915) in 23S rRNA + S-adenosyl-L-homocysteine + H(+). Specifically methylates the pseudouridine at position 1915 (m3Psi1915) in 23S rRNA. The sequence is that of Ribosomal RNA large subunit methyltransferase H from Bacillus pumilus (strain SAFR-032).